The following is a 534-amino-acid chain: ATP synthase subunit alpha 2 (534 aa).

ATP is bound at residue 175–182; it reads GDRQTGKT. Positions 506 to 534 are disordered; the sequence is FQPAPEPETAPKTKTDIKPKPKAAGGESS. Over residues 514–524 the composition is skewed to basic and acidic residues; it reads TAPKTKTDIKP.

The protein belongs to the ATPase alpha/beta chains family. F-type ATPases have 2 components, CF(1) - the catalytic core - and CF(0) - the membrane proton channel. CF(1) has five subunits: alpha(3), beta(3), gamma(1), delta(1), epsilon(1). CF(0) has three main subunits: a(1), b(2) and c(9-12). The alpha and beta chains form an alternating ring which encloses part of the gamma chain. CF(1) is attached to CF(0) by a central stalk formed by the gamma and epsilon chains, while a peripheral stalk is formed by the delta and b chains.

The protein resides in the cell inner membrane. The catalysed reaction is ATP + H2O + 4 H(+)(in) = ADP + phosphate + 5 H(+)(out). Its function is as follows. Produces ATP from ADP in the presence of a proton gradient across the membrane. The alpha chain is a regulatory subunit. This Albidiferax ferrireducens (strain ATCC BAA-621 / DSM 15236 / T118) (Rhodoferax ferrireducens) protein is ATP synthase subunit alpha 2.